The chain runs to 379 residues: UDP-4-amino-4-deoxy-L-arabinose--oxoglutarate aminotransferase (379 aa).

Lys-182 bears the N6-(pyridoxal phosphate)lysine mark.

The protein belongs to the DegT/DnrJ/EryC1 family. ArnB subfamily. Homodimer. Pyridoxal 5'-phosphate serves as cofactor.

It catalyses the reaction UDP-4-amino-4-deoxy-beta-L-arabinose + 2-oxoglutarate = UDP-beta-L-threo-pentopyranos-4-ulose + L-glutamate. It functions in the pathway nucleotide-sugar biosynthesis; UDP-4-deoxy-4-formamido-beta-L-arabinose biosynthesis; UDP-4-deoxy-4-formamido-beta-L-arabinose from UDP-alpha-D-glucuronate: step 2/3. The protein operates within bacterial outer membrane biogenesis; lipopolysaccharide biosynthesis. Functionally, catalyzes the conversion of UDP-4-keto-arabinose (UDP-Ara4O) to UDP-4-amino-4-deoxy-L-arabinose (UDP-L-Ara4N). The modified arabinose is attached to lipid A and is required for resistance to polymyxin and cationic antimicrobial peptides. In Shigella flexneri, this protein is UDP-4-amino-4-deoxy-L-arabinose--oxoglutarate aminotransferase.